We begin with the raw amino-acid sequence, 157 residues long: Snaclec 3 (157 aa).

The N-terminal stretch at 1 to 23 is a signal peptide; it reads MGRLIFLSFGWLVVFLSLSGTGA. Intrachain disulfides connect Cys27–Cys38, Cys55–Cys153, and Cys128–Cys145. The 121-residue stretch at 34–154 folds into the C-type lectin domain; that stretch reads YGQHCYRAFS…CAGHYPFICK (121 aa).

Belongs to the snaclec family. As to quaternary structure, heterodimer; disulfide-linked. Expressed by the venom gland.

Its subcellular location is the secreted. Functionally, interferes with one step of hemostasis (modulation of platelet aggregation, or coagulation cascade, for example). In Bitis gabonica (Gaboon adder), this protein is Snaclec 3.